We begin with the raw amino-acid sequence, 199 residues long: Recombination protein RecR (199 aa).

The C4-type zinc-finger motif lies at 58–73 (CKKCFNLTSEDECEIC). The Toprim domain occupies 81–175 (KLICVVSETK…KVTRIAYGLP (95 aa)).

The protein belongs to the RecR family.

Functionally, may play a role in DNA repair. It seems to be involved in an RecBC-independent recombinational process of DNA repair. It may act with RecF and RecO. This is Recombination protein RecR from Prochlorococcus marinus (strain AS9601).